The primary structure comprises 372 residues: Alanine racemase (372 aa).

The active-site Proton acceptor; specific for D-alanine is the K48. K48 carries the post-translational modification N6-(pyridoxal phosphate)lysine. R143 serves as a coordination point for substrate. Y268 functions as the Proton acceptor; specific for L-alanine in the catalytic mechanism. M316 provides a ligand contact to substrate.

The protein belongs to the alanine racemase family. Requires pyridoxal 5'-phosphate as cofactor.

The enzyme catalyses L-alanine = D-alanine. It participates in amino-acid biosynthesis; D-alanine biosynthesis; D-alanine from L-alanine: step 1/1. Its function is as follows. Catalyzes the interconversion of L-alanine and D-alanine. May also act on other amino acids. This chain is Alanine racemase (alr), found in Vibrio vulnificus (strain YJ016).